Consider the following 1096-residue polypeptide: DNA-directed RNA polymerase subunit beta (1096 aa).

It belongs to the RNA polymerase beta chain family. As to quaternary structure, in plastids the minimal PEP RNA polymerase catalytic core is composed of four subunits: alpha, beta, beta', and beta''. When a (nuclear-encoded) sigma factor is associated with the core the holoenzyme is formed, which can initiate transcription.

The protein localises to the plastid. It localises to the chloroplast. It catalyses the reaction RNA(n) + a ribonucleoside 5'-triphosphate = RNA(n+1) + diphosphate. Functionally, DNA-dependent RNA polymerase catalyzes the transcription of DNA into RNA using the four ribonucleoside triphosphates as substrates. The sequence is that of DNA-directed RNA polymerase subunit beta from Guillardia theta (Cryptophyte).